Consider the following 651-residue polypeptide: Protein RcaC (651 aa).

The Response regulatory 1 domain maps to 2-116 (KILLVEDDDV…ELIARIRALL (115 aa)). At Asp51 the chain carries 4-aspartylphosphate. The ompR/PhoB-type DNA-binding region spans 124-223 (FPLLTWGDLL…MHGRGYYLKA (100 aa)). Response regulatory domains lie at 384 to 519 (LLLM…VNLL) and 527 to 643 (KVMI…LRRL).

Functionally, required for chromatic adaptation. Thought to be a positive regulator of phycobiliproteins. This is Protein RcaC (rcaC) from Microchaete diplosiphon (Fremyella diplosiphon).